A 148-amino-acid polypeptide reads, in one-letter code: Lysozyme-like protein 1 (148 aa).

The signal sequence occupies residues 1-19 (MKSVGVFALIISFSIVAES). In terms of domain architecture, C-type lysozyme spans 20 to 148 (KIYTRCKLAK…SEWKRGCEVS (129 aa)). 4 disulfides stabilise this stretch: cysteine 25–cysteine 145, cysteine 49–cysteine 133, cysteine 83–cysteine 98, and cysteine 94–cysteine 112. Glutamate 54 is an active-site residue. An N-linked (GlcNAc...) asparagine glycan is attached at asparagine 58. Residue aspartate 71 is part of the active site.

The protein belongs to the glycosyl hydrolase 22 family. In terms of assembly, monomer.

It is found in the secreted. It catalyses the reaction Hydrolysis of (1-&gt;4)-beta-linkages between N-acetylmuramic acid and N-acetyl-D-glucosamine residues in a peptidoglycan and between N-acetyl-D-glucosamine residues in chitodextrins.. In Mus musculus (Mouse), this protein is Lysozyme-like protein 1 (Lyzl1).